The chain runs to 300 residues: Protoheme IX farnesyltransferase 1 (300 aa).

Helical transmembrane passes span 28–48 (VVALMLLTVLVGMCLAMPTIL), 54–74 (VAGLLGIAMMAGSAAALNHLI), 100–120 (ALLFAALLGCLGFVILYVFTN), 122–142 (LTAWLTFASLIGYALIYTAYL), 149–169 (NIVIGGLAGAMPPLLGWTAVT), 176–196 (ALLLVIIIFLWTPPHFWALAI), 222–242 (CILLYTILLAMACLLPVLVGM), 243–263 (SGPLYFVCSSLLSTGFIYKAW), and 280–300 (FSIYHLMLLFMALLLDHYLWA).

Belongs to the UbiA prenyltransferase family. Protoheme IX farnesyltransferase subfamily.

Its subcellular location is the cell inner membrane. The enzyme catalyses heme b + (2E,6E)-farnesyl diphosphate + H2O = Fe(II)-heme o + diphosphate. It functions in the pathway porphyrin-containing compound metabolism; heme O biosynthesis; heme O from protoheme: step 1/1. In terms of biological role, converts heme B (protoheme IX) to heme O by substitution of the vinyl group on carbon 2 of heme B porphyrin ring with a hydroxyethyl farnesyl side group. The sequence is that of Protoheme IX farnesyltransferase 1 from Shewanella sp. (strain ANA-3).